We begin with the raw amino-acid sequence, 236 residues long: Ribose-5-phosphate isomerase A (236 aa).

Substrate-binding positions include 31 to 34, 88 to 91, and 101 to 104; these read TGST, DGAD, and KGGG. The Proton acceptor role is filled by E110. K128 is a substrate binding site.

The protein belongs to the ribose 5-phosphate isomerase family. In terms of assembly, homodimer.

The catalysed reaction is aldehydo-D-ribose 5-phosphate = D-ribulose 5-phosphate. The protein operates within carbohydrate degradation; pentose phosphate pathway; D-ribose 5-phosphate from D-ribulose 5-phosphate (non-oxidative stage): step 1/1. Its function is as follows. Catalyzes the reversible conversion of ribose-5-phosphate to ribulose 5-phosphate. The sequence is that of Ribose-5-phosphate isomerase A from Thermosynechococcus vestitus (strain NIES-2133 / IAM M-273 / BP-1).